Reading from the N-terminus, the 258-residue chain is Snake venom serine protease 5 (258 aa).

A signal peptide spans 1 to 18 (MVLIRVLANLLILQLSYA). The propeptide occupies 19 to 24 (QKSSEL). A Peptidase S1 domain is found at 25 to 249 (VVGGRPCNIN…HLDWIQNIIA (225 aa)). Intrachain disulfides connect Cys-31-Cys-163, Cys-50-Cys-66, Cys-98-Cys-256, Cys-142-Cys-210, Cys-174-Cys-189, and Cys-200-Cys-225. Residue Asn-44 is glycosylated (N-linked (GlcNAc...) asparagine). His-65 acts as the Charge relay system in catalysis. Residue Asn-103 is glycosylated (N-linked (GlcNAc...) asparagine). The active-site Charge relay system is the Asp-110. Residues Asn-121, Asn-122, Asn-154, and Asn-170 are each glycosylated (N-linked (GlcNAc...) asparagine). Residue Ser-204 is the Charge relay system of the active site. The N-linked (GlcNAc...) asparagine glycan is linked to Asn-251.

This sequence belongs to the peptidase S1 family. Snake venom subfamily. Monomer. As to expression, expressed by the venom gland.

It localises to the secreted. Its function is as follows. Snake venom serine protease that may act in the hemostasis system of the prey. In Trimeresurus stejnegeri (Chinese green tree viper), this protein is Snake venom serine protease 5.